The following is a 483-amino-acid chain: MSKEDFVIKPEAAGASTDTSEWPLLLKNFDKLLVRSGHYTPIPAGSSPLKRDLKSYISSGVINLDKPSNPSSHEVVAWIKRILRCEKTGHSGTLDPKVTGCLIVCIDRATRLVKSQQGAGKEYVCIVRLHDALKDEKDLGRSLENLTGALFQRPPLISAVKRQLRVRTIYESNLIEFDNKRNLGVFWASCEAGTYMRTLCVHLGMLLGVGGHMQELRRVRSGALSENDNMVTLHDVMDAQWVYDNTRDESYLRSIIQPLETLLVGYKRIVVKDSAVNAVCYGAKLMIPGLLRYEEGIELYDEIVLITTKGEAIAVAIAQMSTVDLASCDHGVVASVKRCIMERDLYPRRWGLGPVAQKKKQMKADGKLDKYGRVNENTPEQWKKEYVPLDNAEQSTSSSQETKETEEEPKKAKEDSLIKEVETEKEEVKEDDSKKEKKEKKDKKEKKEKKEKKDKKEKKEKKEKKRKSEDGDSEEKKSKKSKK.

Residue Lys-9 forms a Glycyl lysine isopeptide (Lys-Gly) (interchain with G-Cter in ubiquitin) linkage. Ser-47 is subject to Phosphoserine. Asp-95 (nucleophile) is an active-site residue. The 76-residue stretch at 266–341 (YKRIVVKDSA…VVASVKRCIM (76 aa)) folds into the PUA domain. A Glycyl lysine isopeptide (Lys-Gly) (interchain with G-Cter in ubiquitin) cross-link involves residue Lys-267. Residues 357–483 (QKKKQMKADG…EEKKSKKSKK (127 aa)) are disordered. Residues 362–373 (MKADGKLDKYGR) show a composition bias toward basic and acidic residues. Thr-378 is modified (phosphothreonine). Residues 408–436 (EPKKAKEDSLIKEVETEKEEVKEDDSKKE) are compositionally biased toward basic and acidic residues. 10 repeat units span residues 434–436 (KKE), 437–439 (KKE), 440–442 (KKD), 443–445 (KKE), 446–448 (KKE), 449–451 (KKE), 452–454 (KKD), 455–457 (KKE), 458–460 (KKE), and 461–463 (KKE). The segment at 434 to 463 (KKEKKEKKDKKEKKEKKEKKDKKEKKEKKE) is 10 X 3 AA tandem repeats of K-K-[DE]. Residues 437–465 (KKEKKDKKEKKEKKEKKDKKEKKEKKEKK) show a composition bias toward basic residues. The segment covering 466–477 (RKSEDGDSEEKK) has biased composition (basic and acidic residues).

It belongs to the pseudouridine synthase TruB family. In terms of assembly, component of the small nucleolar ribonucleoprotein particles containing H/ACA-type snoRNAs (H/ACA snoRNPs). The protein component of the H/ACA snoRNP contains CBF5, GAR1, NHP2 and NOP10. The complex contains a stable core composed of CBF5 and NOP10, to which GAR1 and NHP2 subsequently bind. Also interacts with NAF1 and SHQ1, which may be required for assembly of H/ACA snoRNP complexes. May also associate with the CBF3 110 kDa subunit (CBF2). Interacts with the trimethylguanosine synthase (TGS1) and with NOP53.

It localises to the nucleus. Its subcellular location is the nucleolus. The protein localises to the chromosome. It is found in the centromere. The protein resides in the cytoplasm. It localises to the cytoskeleton. The enzyme catalyses uridine in 5S rRNA = pseudouridine in 5S rRNA. The catalysed reaction is uridine in snRNA = pseudouridine in snRNA. It carries out the reaction a uridine in mRNA = a pseudouridine in mRNA. Catalytic subunit of H/ACA small nucleolar ribonucleoprotein (H/ACA snoRNP) complex, which catalyzes pseudouridylation of rRNA. This involves the isomerization of uridine such that the ribose is subsequently attached to C5, instead of the normal N1. Pseudouridine ('psi') residues may serve to stabilize the conformation of rRNAs and play a central role in ribosomal RNA processing. The H/ACA snoRNP complex also mediates pseudouridylation of other types of RNAs. Catalyzes pseudouridylation at position 93 in U2 snRNA. Also catalyzes pseudouridylation of mRNAs; H/ACA-type snoRNAs probably guide pseudouridylation of mRNAs. It is a centromeric DNA-CBF3-binding factor which is involved in mitotic chromosome segregation. Essential for cell growth. In Saccharomyces cerevisiae (strain ATCC 204508 / S288c) (Baker's yeast), this protein is H/ACA ribonucleoprotein complex subunit CBF5 (CBF5).